Here is a 133-residue protein sequence, read N- to C-terminus: Small ribosomal subunit protein uS8 (133 aa).

It belongs to the universal ribosomal protein uS8 family. As to quaternary structure, part of the 30S ribosomal subunit. Contacts proteins S5 and S12.

In terms of biological role, one of the primary rRNA binding proteins, it binds directly to 16S rRNA central domain where it helps coordinate assembly of the platform of the 30S subunit. This chain is Small ribosomal subunit protein uS8, found in Oenococcus oeni (strain ATCC BAA-331 / PSU-1).